Consider the following 141-residue polypeptide: uncharacterized protein (141 aa).

2 helical membrane-spanning segments follow: residues 41 to 61 (LIML…NYLF) and 95 to 115 (IIFL…SGFF).

Its subcellular location is the cell membrane. This is an uncharacterized protein from Rickettsia prowazekii (strain Madrid E).